Consider the following 892-residue polypeptide: LEAF RUST 10 DISEASE-RESISTANCE LOCUS RECEPTOR-LIKE PROTEIN KINASE-like 2.8 (892 aa).

A signal peptide spans 1-27 (MYYHSLSSYSILFFLFSLFHHLPCASS). The Extracellular segment spans residues 28–496 (NQGLGWCESL…RFIATLVRYT (469 aa)). 12 N-linked (GlcNAc...) asparagine glycosylation sites follow: N42, N71, N88, N112, N186, N222, N230, N286, N358, N384, N407, and N458. The helical transmembrane segment at 497–517 (FIALGALTGVVIVFLVLLCPC) threads the bilayer. Residues 518–892 (FRVQIFRKRK…TNSKLESSSL (375 aa)) lie on the Cytoplasmic side of the membrane. Position 547 is a phosphothreonine (T547). Positions 556–854 (KSFTEVVGRG…ALEVPPRPVL (299 aa)) constitute a Protein kinase domain. ATP-binding positions include 562 to 570 (VGRGGFGIV) and K584. Residue Y629 is modified to Phosphotyrosine. The Proton acceptor role is filled by D680. Phosphothreonine occurs at positions 717 and 720.

Belongs to the protein kinase superfamily. Ser/Thr protein kinase family.

It is found in the membrane. It catalyses the reaction L-seryl-[protein] + ATP = O-phospho-L-seryl-[protein] + ADP + H(+). The catalysed reaction is L-threonyl-[protein] + ATP = O-phospho-L-threonyl-[protein] + ADP + H(+). The polypeptide is LEAF RUST 10 DISEASE-RESISTANCE LOCUS RECEPTOR-LIKE PROTEIN KINASE-like 2.8 (Arabidopsis thaliana (Mouse-ear cress)).